We begin with the raw amino-acid sequence, 561 residues long: Alpha-1D adrenergic receptor (561 aa).

The Extracellular portion of the chain corresponds to 1–90 (MTFRDILSVT…VGGLVVSAQG (90 aa)). The disordered stretch occupies residues 10-71 (TFEGPRSSSS…SSTGEPGAAA (62 aa)). Over residues 21–56 (GGSGAGGGAGTVGPEGGAVGGVPGATGGGAVVGTGS) the composition is skewed to gly residues. 2 N-linked (GlcNAc...) asparagine glycosylation sites follow: Asn60 and Asn76. Residues 91 to 115 (VGVGVFLAAFILTAVAGNLLVILSV) form a helical membrane-spanning segment. Over 116 to 127 (ACNRHLQTVTNY) the chain is Cytoplasmic. A helical membrane pass occupies residues 128-153 (FIVNLAVADLLLSAAVLPFSATMEVL). Over 154 to 163 (GFWAFGRTFC) the chain is Extracellular. Residues 164–186 (DVWAAVDVLCCTASILSLCTISV) form a helical membrane-spanning segment. The Cytoplasmic portion of the chain corresponds to 187-207 (DRYVGVRHSLKYPAIMTERKA). Residues 208-232 (AAILALLWAVALVVSVGPLLGWKEP) traverse the membrane as a helical segment. Over 233–245 (VPPDERFCGITEE) the chain is Extracellular. Residues 246–269 (VGYAIFSSVCSFYLPMAVIVVMYC) form a helical membrane-spanning segment. The Cytoplasmic segment spans residues 270–342 (RVYVVARSTT…KFSREKKAAK (73 aa)). Residues 343–367 (TLAIVVGVFVLCWFPFFFVLPLGSL) form a helical membrane-spanning segment. Topologically, residues 368 to 374 (FPQLKPS) are extracellular. The chain crosses the membrane as a helical span at residues 375–399 (EGVFKVIFWLGYFNSCVNPLIYPCS). The Cytoplasmic portion of the chain corresponds to 400–561 (SREFKRAFLR…DYSNLRETDI (162 aa)). Cys413 is lipidated: S-palmitoyl cysteine. A disordered region spans residues 452–481 (APLALTAHPGAGSADTPETQDSVSSSRKPA). Over residues 467-479 (TPETQDSVSSSRK) the composition is skewed to polar residues.

This sequence belongs to the G-protein coupled receptor 1 family. Adrenergic receptor subfamily. ADRA1D sub-subfamily. Interacts with FLNA (via filamin repeat 21); increases PKA-mediated phosphorylation of FLNA. Post-translationally, palmitoylated. Palmitoylation by ZDHHC21 may increase the expression of the receptor and regulate downstream signaling. In terms of tissue distribution, vas deferens, hippocampus, cerebral cortex, aorta, brain stem, heart and spleen.

It localises to the cell membrane. This alpha-adrenergic receptor mediates its effect through the influx of extracellular calcium. The chain is Alpha-1D adrenergic receptor (Adra1d) from Rattus norvegicus (Rat).